Consider the following 145-residue polypeptide: 3-hydroxyacyl-[acyl-carrier-protein] dehydratase FabZ (145 aa).

The active site involves His-49.

The protein belongs to the thioester dehydratase family. FabZ subfamily.

The protein resides in the cytoplasm. It carries out the reaction a (3R)-hydroxyacyl-[ACP] = a (2E)-enoyl-[ACP] + H2O. Functionally, involved in unsaturated fatty acids biosynthesis. Catalyzes the dehydration of short chain beta-hydroxyacyl-ACPs and long chain saturated and unsaturated beta-hydroxyacyl-ACPs. In Anaplasma phagocytophilum (strain HZ), this protein is 3-hydroxyacyl-[acyl-carrier-protein] dehydratase FabZ.